Reading from the N-terminus, the 372-residue chain is Queuine tRNA-ribosyltransferase (372 aa).

The active-site Proton acceptor is Asp92. Substrate is bound by residues 92–96 (DSGGF), Asp146, Gln188, and Gly215. The interval 246-252 (GIGTLRE) is RNA binding. Asp265 (nucleophile) is an active-site residue. Positions 270–274 (TRLGR) are RNA binding; important for wobble base 34 recognition. The Zn(2+) site is built by Cys303, Cys305, Cys308, and His334.

The protein belongs to the queuine tRNA-ribosyltransferase family. In terms of assembly, homodimer. Within each dimer, one monomer is responsible for RNA recognition and catalysis, while the other monomer binds to the replacement base PreQ1. Zn(2+) serves as cofactor.

It carries out the reaction 7-aminomethyl-7-carbaguanine + guanosine(34) in tRNA = 7-aminomethyl-7-carbaguanosine(34) in tRNA + guanine. Its pathway is tRNA modification; tRNA-queuosine biosynthesis. Catalyzes the base-exchange of a guanine (G) residue with the queuine precursor 7-aminomethyl-7-deazaguanine (PreQ1) at position 34 (anticodon wobble position) in tRNAs with GU(N) anticodons (tRNA-Asp, -Asn, -His and -Tyr). Catalysis occurs through a double-displacement mechanism. The nucleophile active site attacks the C1' of nucleotide 34 to detach the guanine base from the RNA, forming a covalent enzyme-RNA intermediate. The proton acceptor active site deprotonates the incoming PreQ1, allowing a nucleophilic attack on the C1' of the ribose to form the product. After dissociation, two additional enzymatic reactions on the tRNA convert PreQ1 to queuine (Q), resulting in the hypermodified nucleoside queuosine (7-(((4,5-cis-dihydroxy-2-cyclopenten-1-yl)amino)methyl)-7-deazaguanosine). The polypeptide is Queuine tRNA-ribosyltransferase (Prochlorococcus marinus (strain MIT 9313)).